The sequence spans 156 residues: 3-hydroxyacyl-[acyl-carrier-protein] dehydratase FabZ (156 aa).

The active site involves histidine 57.

It belongs to the thioester dehydratase family. FabZ subfamily.

Its subcellular location is the cytoplasm. It catalyses the reaction a (3R)-hydroxyacyl-[ACP] = a (2E)-enoyl-[ACP] + H2O. Functionally, involved in unsaturated fatty acids biosynthesis. Catalyzes the dehydration of short chain beta-hydroxyacyl-ACPs and long chain saturated and unsaturated beta-hydroxyacyl-ACPs. The chain is 3-hydroxyacyl-[acyl-carrier-protein] dehydratase FabZ from Anaeromyxobacter dehalogenans (strain 2CP-C).